The primary structure comprises 200 residues: V-set and transmembrane domain-containing protein 5 (200 aa).

The N-terminal stretch at 1–28 (MRPLPSGRRKTRGISLGLFALCLAAARC) is a signal peptide. Over 29 to 147 (LQSQGVSLYI…VSEILYEDLH (119 aa)) the chain is Extracellular. The 103-residue stretch at 37 to 139 (YIPQATINAT…QFGTIVLHVS (103 aa)) folds into the Ig-like C2-type domain. Residue asparagine 102 is glycosylated (N-linked (GlcNAc...) asparagine). Residues 148 to 168 (FVAVILAFLAAVAAVLISLMW) traverse the membrane as a helical segment. Over 169–200 (VCNKCAYKFQRKRRHKLKESTTEEIELEDVEC) the chain is Cytoplasmic. The important for CDC42-dependent filopodia induction stretch occupies residues 170–186 (CNKCAYKFQRKRRHKLK).

In terms of assembly, can homooligomerize through cis interactions within the same cell membrane. N-glycosylated.

The protein resides in the cell membrane. It is found in the cell projection. The protein localises to the dendrite. Its subcellular location is the axon. Cell adhesion-like membrane protein of the central nervous system (CNS) which modulates both the position and complexity of central neurons by altering their membrane morphology and dynamics. Involved in the formation of neuronal dendrites and protrusions including dendritic filopodia. In synaptogenesis, regulates synapse formation by altering dendritic spine morphology and actin distribution. Promotes formation of unstable neuronal spines such as thin and branched types. Regulates neuronal morphogenesis and migration during cortical development in the brain. This is V-set and transmembrane domain-containing protein 5 (VSTM5) from Homo sapiens (Human).